A 284-amino-acid chain; its full sequence is Tropomyosin isoforms a/b/d/f (284 aa).

A coiled-coil region spans residues Met1–Tyr284. Positions Glu40–Val78 are disordered.

The protein belongs to the tropomyosin family. Isoform a and isoform d are expressed in body wall muscles, vulva, anus muscles and male tail muscles. Located to the myofibrils of thin actin filaments.

Its subcellular location is the cytoplasm. The protein localises to the myofibril. It localises to the sarcomere. It is found in the i band. Its function is as follows. Tropomyosin, in association with the troponin complex, plays a central role in the calcium dependent regulation of muscle contraction. Involved in muscle actin filament organization and muscle arm extension and morphology. Protects actin filaments from depolymerization by unc-60 in vitro. Also has a role in male mating behavior by regulating the copulatory spicules. Binds to F-actin. This Caenorhabditis elegans protein is Tropomyosin isoforms a/b/d/f (lev-11).